We begin with the raw amino-acid sequence, 131 residues long: Large ribosomal subunit protein bL17 (131 aa).

The protein belongs to the bacterial ribosomal protein bL17 family. As to quaternary structure, part of the 50S ribosomal subunit. Contacts protein L32.

In Shewanella sp. (strain ANA-3), this protein is Large ribosomal subunit protein bL17.